A 229-amino-acid chain; its full sequence is 7-cyano-7-deazaguanine synthase (229 aa).

7–17 is a binding site for ATP; it reads LSGGLDSTTVL. Zn(2+) is bound by residues Cys191, Cys204, Cys207, and Cys210.

This sequence belongs to the QueC family. Zn(2+) is required as a cofactor.

The enzyme catalyses 7-carboxy-7-deazaguanine + NH4(+) + ATP = 7-cyano-7-deazaguanine + ADP + phosphate + H2O + H(+). Its pathway is purine metabolism; 7-cyano-7-deazaguanine biosynthesis. In terms of biological role, catalyzes the ATP-dependent conversion of 7-carboxy-7-deazaguanine (CDG) to 7-cyano-7-deazaguanine (preQ(0)). In Cyanothece sp. (strain PCC 7425 / ATCC 29141), this protein is 7-cyano-7-deazaguanine synthase.